We begin with the raw amino-acid sequence, 309 residues long: MSNASKFGKVAVLFGGKSAERDVSLDSGQAVLDALLRSGVQAEAFDPKERSVTELVGYDRAFIVLHGRGGEDGQIQGVLEWLDIPYTGTGVQGSAIGMDKIKTKQIWQGSDLPTAPYRIVSKDSDLNEIVASLGLPVIIKPVHEGSSIGMSKVEKIEDFAPAIEKATAHDAIVMAEKWITGREYTIVVLNGKALPVIRLQPPQDVAFYDYDAKYQRNDVQYGIPSGLSDSDEKKLQELTLRAFHTVGASGWGRVDAMQDEHGNFWLLEINTVPGMTSHSLVPKAAQAIGIDFDALCVEILAQTLTGLAH.

One can recognise an ATP-grasp domain in the interval 104–301 (KQIWQGSDLP…FDALCVEILA (198 aa)). 130 to 185 (VASLGLPVIIKPVHEGSSIGMSKVEKIEDFAPAIEKATAHDAIVMAEKWITGREYT) contributes to the ATP binding site. Positions 255, 268, and 270 each coordinate Mg(2+).

It belongs to the D-alanine--D-alanine ligase family. Requires Mg(2+) as cofactor. The cofactor is Mn(2+).

The protein resides in the cytoplasm. It catalyses the reaction 2 D-alanine + ATP = D-alanyl-D-alanine + ADP + phosphate + H(+). It functions in the pathway cell wall biogenesis; peptidoglycan biosynthesis. In terms of biological role, cell wall formation. This chain is D-alanine--D-alanine ligase, found in Acinetobacter baylyi (strain ATCC 33305 / BD413 / ADP1).